The sequence spans 541 residues: 3-oxoacyl-[acyl-carrier-protein] synthase II, chloroplastic (541 aa).

The N-terminal 103 residues, 1–103, are a transit peptide targeting the chloroplast; the sequence is MVGASSSYAS…NRNQRRLNRA (103 aa). Residues 129–539 enclose the Ketosynthase family 3 (KS3) domain; sequence QRRVVVTGMG…GHNSSIIFAP (411 aa). Residues Cys-292, His-432, and His-468 each act as for beta-ketoacyl synthase activity in the active site.

The protein belongs to the thiolase-like superfamily. Beta-ketoacyl-ACP synthases family. Homodimer. As to expression, mostly expressed in siliques, and, to a lower extent, in leaves, stems, flower buds, and flowers.

It localises to the plastid. Its subcellular location is the chloroplast stroma. It carries out the reaction a fatty acyl-[ACP] + malonyl-[ACP] + H(+) = a 3-oxoacyl-[ACP] + holo-[ACP] + CO2. Functionally, essential protein that catalyzes the condensation reaction of fatty acid synthesis by the addition to an acyl acceptor of two carbons from malonyl-ACP. Specific for elongation from C-16 and C-16 to unsaturated C-18 fatty acids. Confers resistance to low temperatures by maintaining chloroplast membranes integrity. Involved in the regulation of fatty acids ratios during seed metabolism. Required for embryo development, especially at the transition from the globular to the heart stage. This chain is 3-oxoacyl-[acyl-carrier-protein] synthase II, chloroplastic (KAS2), found in Arabidopsis thaliana (Mouse-ear cress).